The sequence spans 115 residues: NADH-ubiquinone oxidoreductase chain 3 (115 aa).

3 helical membrane passes run 4–24, 55–75, and 84–104; these read ALTL…AFWL, FFLV…LLPL, and LTTM…SLAY.

This sequence belongs to the complex I subunit 3 family. In terms of assembly, core subunit of respiratory chain NADH dehydrogenase (Complex I) which is composed of 45 different subunits. Interacts with TMEM186. Interacts with TMEM242.

The protein localises to the mitochondrion inner membrane. The catalysed reaction is a ubiquinone + NADH + 5 H(+)(in) = a ubiquinol + NAD(+) + 4 H(+)(out). Its function is as follows. Core subunit of the mitochondrial membrane respiratory chain NADH dehydrogenase (Complex I) which catalyzes electron transfer from NADH through the respiratory chain, using ubiquinone as an electron acceptor. Essential for the catalytic activity of complex I. This chain is NADH-ubiquinone oxidoreductase chain 3, found in Phoca vitulina (Harbor seal).